The sequence spans 298 residues: ATP synthase gamma chain (298 aa).

Belongs to the ATPase gamma chain family. F-type ATPases have 2 components, CF(1) - the catalytic core - and CF(0) - the membrane proton channel. CF(1) has five subunits: alpha(3), beta(3), gamma(1), delta(1), epsilon(1). CF(0) has three main subunits: a, b and c.

Its subcellular location is the cell inner membrane. In terms of biological role, produces ATP from ADP in the presence of a proton gradient across the membrane. The gamma chain is believed to be important in regulating ATPase activity and the flow of protons through the CF(0) complex. The chain is ATP synthase gamma chain from Desulforapulum autotrophicum (strain ATCC 43914 / DSM 3382 / VKM B-1955 / HRM2) (Desulfobacterium autotrophicum).